Consider the following 453-residue polypeptide: Homogentisate 1,2-dioxygenase (453 aa).

Residue His-306 is the Proton acceptor of the active site. The Fe cation site is built by His-349 and Glu-355. Homogentisate contacts are provided by Tyr-364 and His-385. Residue His-385 participates in Fe cation binding.

The protein belongs to the homogentisate dioxygenase family. As to quaternary structure, hexamer; dimer of trimers. Fe cation serves as cofactor.

The catalysed reaction is homogentisate + O2 = 4-maleylacetoacetate + H(+). It participates in amino-acid degradation; L-phenylalanine degradation; acetoacetate and fumarate from L-phenylalanine: step 4/6. Involved in the catabolism of homogentisate (2,5-dihydroxyphenylacetate or 2,5-OH-PhAc), a central intermediate in the degradation of phenylalanine and tyrosine. Catalyzes the oxidative ring cleavage of the aromatic ring of homogentisate to yield maleylacetoacetate. The sequence is that of Homogentisate 1,2-dioxygenase from Rhizobium etli (strain CIAT 652).